A 215-amino-acid polypeptide reads, in one-letter code: 16S rRNA (adenine(1408)-N(1))-methyltransferase (215 aa).

Residues Gly32, Asp55, Ala87–Glu88, Leu102–Ser107, and Thr191–Trp193 contribute to the S-adenosyl-L-methionine site.

The protein belongs to the methyltransferase superfamily. Kanamycin-apramycin resistance family.

The enzyme catalyses adenosine(1408) in 16S rRNA + S-adenosyl-L-methionine = N(1)-methyladenosine(1408) in 16S rRNA + S-adenosyl-L-homocysteine + H(+). Functionally, specifically methylates the N(1) position of adenine 1408 in 16S rRNA. Confers resistance to various aminoglycosides. The chain is 16S rRNA (adenine(1408)-N(1))-methyltransferase (kamB) from Streptoalloteichus hindustanus.